The following is a 198-amino-acid chain: Holliday junction branch migration complex subunit RuvA (198 aa).

Residues 1–63 are domain I; sequence MIALLTGQIA…EDAIQLYGFR (63 aa). Residues 64–142 form a domain II region; it reads TSLEKSFFQL…KLDLSSVVVP (79 aa). A flexible linker region spans residues 143–153; the sequence is EPRQMPEDDLL. Residues 153–198 form a domain III region; sequence LEDVVSALLNLGYKEPQVRKVLAGLNPGSDASLEGVLKQALKSLMR.

Belongs to the RuvA family. As to quaternary structure, homotetramer. Forms an RuvA(8)-RuvB(12)-Holliday junction (HJ) complex. HJ DNA is sandwiched between 2 RuvA tetramers; dsDNA enters through RuvA and exits via RuvB. An RuvB hexamer assembles on each DNA strand where it exits the tetramer. Each RuvB hexamer is contacted by two RuvA subunits (via domain III) on 2 adjacent RuvB subunits; this complex drives branch migration. In the full resolvosome a probable DNA-RuvA(4)-RuvB(12)-RuvC(2) complex forms which resolves the HJ.

It localises to the cytoplasm. In terms of biological role, the RuvA-RuvB-RuvC complex processes Holliday junction (HJ) DNA during genetic recombination and DNA repair, while the RuvA-RuvB complex plays an important role in the rescue of blocked DNA replication forks via replication fork reversal (RFR). RuvA specifically binds to HJ cruciform DNA, conferring on it an open structure. The RuvB hexamer acts as an ATP-dependent pump, pulling dsDNA into and through the RuvAB complex. HJ branch migration allows RuvC to scan DNA until it finds its consensus sequence, where it cleaves and resolves the cruciform DNA. The protein is Holliday junction branch migration complex subunit RuvA of Pelobacter propionicus (strain DSM 2379 / NBRC 103807 / OttBd1).